A 638-amino-acid polypeptide reads, in one-letter code: Probable lysine-specific demethylase 4F (638 aa).

The 43-residue stretch at 15–57 folds into the JmjN domain; sequence IMTFYPTMEEFADFNTYVAYMESQGAHRAGLAKVIPPKEWKAR. Y133 provides a ligand contact to 2-oxoglutarate. One can recognise a JmjC domain in the interval 143 to 309; that stretch reads EESTKQWNLG…YGKVASQCSC (167 aa). Residues H189 and E191 each coordinate Fe cation. 2-oxoglutarate contacts are provided by N199 and K207. Zn(2+)-binding residues include C235 and H241. Residue K242 participates in 2-oxoglutarate binding. H277 is a Fe cation binding site. 2 residues coordinate Zn(2+): C307 and C309. Residues 426–474 are disordered; sequence PCRGCGRGRGRGRGRGRRPRELGTEETTVQSAAKRRLSVGTGSRAPGRK. Over residues 431–443 the composition is skewed to basic residues; the sequence is GRGRGRGRGRGRR.

Belongs to the JHDM3 histone demethylase family. Fe(2+) serves as cofactor.

The protein localises to the nucleus. It carries out the reaction N(6),N(6),N(6)-trimethyl-L-lysyl(9)-[histone H3] + 2 2-oxoglutarate + 2 O2 = N(6)-methyl-L-lysyl(9)-[histone H3] + 2 formaldehyde + 2 succinate + 2 CO2. Its function is as follows. Probable histone demethylase that specifically demethylates 'Lys-9' of histone H3, thereby playing a central role in histone code. This chain is Probable lysine-specific demethylase 4F, found in Homo sapiens (Human).